The following is a 145-amino-acid chain: Lipoprotein signal peptidase (145 aa).

The next 2 membrane-spanning stretches (helical) occupy residues 57–77 (LFFI…MIKL) and 79–99 (ENSL…GNLI). Catalysis depends on residues aspartate 109 and aspartate 124. Residues 120-140 (FNVADSFIVVGAIILGYLMIF) traverse the membrane as a helical segment.

It belongs to the peptidase A8 family.

It localises to the cell membrane. It carries out the reaction Release of signal peptides from bacterial membrane prolipoproteins. Hydrolyzes -Xaa-Yaa-Zaa-|-(S,diacylglyceryl)Cys-, in which Xaa is hydrophobic (preferably Leu), and Yaa (Ala or Ser) and Zaa (Gly or Ala) have small, neutral side chains.. The protein operates within protein modification; lipoprotein biosynthesis (signal peptide cleavage). This protein specifically catalyzes the removal of signal peptides from prolipoproteins. The chain is Lipoprotein signal peptidase from Caldanaerobacter subterraneus subsp. tengcongensis (strain DSM 15242 / JCM 11007 / NBRC 100824 / MB4) (Thermoanaerobacter tengcongensis).